We begin with the raw amino-acid sequence, 511 residues long: MASEGDWTCDANDAVQITLVQPGEQKPKTLSSFHPQFTYPIFGDDETIFGYKGLIIRLRFAAHDLRPHIHISYDEKFKTVGDTSAVDLIKTLSPFIPEEAFSTLPDYENAVQEDKDAKDFVPPGKLVHNYVTRGRTYEIWAASLADPQVRRLLDRAQVFVSLFIEAGTPLETEDPEWTLERWTVYFVYEKVKPPTPTASQYSIVGYATTYRWWFYQRDSPEKGTVTNDPFPGPEIRPAQLPARLRIAQFLILPPHQGSGHGTHLYTTIHTACFNDSTIVELTVEDPNEAFDALRDTADFHILRPEFLKHNVNINPDPYAELSKKQRPRRVPTSALIPTKLLHDIRSTYKIASTQFAHVLEMFLLGEIPTKNRHAGGANMSRLLVKKYNATDPNERRYYWWRMLVKQRLFKRSRDILIQLEMSDRIEKLEETVTNVEEGYEALIKVFTAREEALMAKQEESGESPETAVLEDSVASSSDSSTRDQRTKRKFTVEDEDEEEEGESEVSKRPKV.

Interaction with histone H4 N-terminus stretches follow at residues 44–46 and 210–212; these read DDE and YRW. Acetyl-CoA contacts are provided by residues 249–251 and 256–262; these read FLI and QGSGHGT. The Proton donor/acceptor role is filled by Glu-284. A disordered region spans residues 455 to 511; the sequence is AKQEESGESPETAVLEDSVASSSDSSTRDQRTKRKFTVEDEDEEEEGESEVSKRPKV. Residues 493–503 are compositionally biased toward acidic residues; that stretch reads EDEDEEEEGES.

The protein belongs to the HAT1 family. As to quaternary structure, component of the HAT-B complex composed of at least hat1 and hat2. The HAT-B complex binds to histone H4 tail.

Its subcellular location is the cytoplasm. It localises to the nucleus. It carries out the reaction L-lysyl-[protein] + acetyl-CoA = N(6)-acetyl-L-lysyl-[protein] + CoA + H(+). In terms of biological role, catalytic component of the histone acetylase B (HAT-B) complex. Acetylates 'Lys-12' of histone H4 which is required for telomeric silencing. Has intrinsic substrate specificity that modifies lysine in recognition sequence GXGKXG. Involved in DNA double-strand break repair. The protein is Histone acetyltransferase type B catalytic subunit (hat1) of Aspergillus oryzae (strain ATCC 42149 / RIB 40) (Yellow koji mold).